Consider the following 287-residue polypeptide: Thiazole synthase (287 aa).

Residue Lys111 is the Schiff-base intermediate with DXP of the active site. Residues Gly172, 203-204 (AG), and 225-226 (NT) each bind 1-deoxy-D-xylulose 5-phosphate. The disordered stretch occupies residues 268-287 (PQEGVISTRPYGSQADEIGS).

This sequence belongs to the ThiG family. Homotetramer. Forms heterodimers with either ThiH or ThiS.

The protein resides in the cytoplasm. The enzyme catalyses [ThiS sulfur-carrier protein]-C-terminal-Gly-aminoethanethioate + 2-iminoacetate + 1-deoxy-D-xylulose 5-phosphate = [ThiS sulfur-carrier protein]-C-terminal Gly-Gly + 2-[(2R,5Z)-2-carboxy-4-methylthiazol-5(2H)-ylidene]ethyl phosphate + 2 H2O + H(+). It participates in cofactor biosynthesis; thiamine diphosphate biosynthesis. Catalyzes the rearrangement of 1-deoxy-D-xylulose 5-phosphate (DXP) to produce the thiazole phosphate moiety of thiamine. Sulfur is provided by the thiocarboxylate moiety of the carrier protein ThiS. In vitro, sulfur can be provided by H(2)S. The polypeptide is Thiazole synthase (Rhodopirellula baltica (strain DSM 10527 / NCIMB 13988 / SH1)).